The chain runs to 334 residues: NADH dehydrogenase (ubiquinone) complex I, assembly factor 6 homolog (334 aa).

The N-terminal 11 residues, 1-11, are a transit peptide targeting the mitochondrion; the sequence is MRRLVRNWNCR.

The protein belongs to the NDUFAF6 family. As to quaternary structure, associates with mitochondrial complex I assembly intermediates during its biogenesis. Forms a complex including sicily, ND-42 and Hsp83; the complex is necessary to chaperone ND-42 in the cytoplasm before mitochondrial import; the interaction between sicily and ND-42 is direct and occurs preferably between the unprocessed forms in the cytoplasm; the interaction with Hsp83 is direct. Interacts with ND-30; interaction is stronger between the unprocessed forms in the cytoplasm. In terms of tissue distribution, expressed in the ventral nerve cord, larval brain, motor neuron axons, imaginal disks, and muscles (at protein level).

The protein resides in the mitochondrion inner membrane. It is found in the cytoplasm. Its subcellular location is the cytosol. Its function is as follows. Involved in the assembly of mitochondrial NADH:ubiquinone oxidoreductase complex (Complex I) at early stages. Interacts with cytosolic Hsp90 to chaperone the Complex I subunit ND-42 in the cytoplasm. The protein is NADH dehydrogenase (ubiquinone) complex I, assembly factor 6 homolog of Drosophila melanogaster (Fruit fly).